The following is a 267-amino-acid chain: 5'-nucleotidase SurE (267 aa).

Positions 9, 10, 40, and 97 each coordinate a divalent metal cation.

Belongs to the SurE nucleotidase family. The cofactor is a divalent metal cation.

The protein resides in the cytoplasm. It catalyses the reaction a ribonucleoside 5'-phosphate + H2O = a ribonucleoside + phosphate. In terms of biological role, nucleotidase that shows phosphatase activity on nucleoside 5'-monophosphates. The chain is 5'-nucleotidase SurE from Helicobacter pylori (strain ATCC 700392 / 26695) (Campylobacter pylori).